The following is a 601-amino-acid chain: DNA topoisomerase I, mitochondrial (601 aa).

The N-terminal 50 residues, Met-1–Gly-50, are a transit peptide targeting the mitochondrion. Residues Arg-22–Glu-48 form a disordered region. Interaction with DNA stretches follow at residues Lys-261–Tyr-262, Arg-324–Lys-329, and Thr-421–Lys-423. Residues Cys-268–Phe-601 form the Topo IB-type catalytic domain. The active-site O-(3'-phospho-DNA)-tyrosine intermediate is the Tyr-559.

The protein belongs to the type IB topoisomerase family. The cofactor is Ca(2+). Mg(2+) is required as a cofactor.

Its subcellular location is the mitochondrion. The enzyme catalyses ATP-independent breakage of single-stranded DNA, followed by passage and rejoining.. Releases the supercoiling and torsional tension of DNA introduced during duplication of mitochondrial DNA by transiently cleaving and rejoining one strand of the DNA duplex. Introduces a single-strand break via transesterification at a target site in duplex DNA. The scissile phosphodiester is attacked by the catalytic tyrosine of the enzyme, resulting in the formation of a DNA-(3'-phosphotyrosyl)-enzyme intermediate and the expulsion of a 5'-OH DNA strand. The free DNA strand then rotates around the intact phosphodiester bond on the opposing strand, thus removing DNA supercoils. Finally, in the religation step, the DNA 5'-OH attacks the covalent intermediate to expel the active-site tyrosine and restore the DNA phosphodiester backbone. In Pan troglodytes (Chimpanzee), this protein is DNA topoisomerase I, mitochondrial (TOP1MT).